Reading from the N-terminus, the 353-residue chain is Photosystem II D2 protein (353 aa).

N-acetylthreonine is present on Thr2. Phosphothreonine is present on Thr2. The helical transmembrane segment at 41 to 61 (CAYFAVGGWFTGTTFVTSWYT) threads the bilayer. Position 118 (His118) interacts with chlorophyll a. A helical membrane pass occupies residues 125-141 (GFMLRQFELARSVQLRP). Positions 130 and 143 each coordinate pheophytin a. A helical membrane pass occupies residues 153–166 (VFVSVFLIYPLGQS). His198 provides a ligand contact to chlorophyll a. A helical transmembrane segment spans residues 208–228 (AALLCAIHGATVENTLFEDGD). A plastoquinone-binding residues include His215 and Phe262. Residue His215 coordinates Fe cation. His269 provides a ligand contact to Fe cation. Residues 279–295 (GLWMSALGVVGLALNLR) form a helical membrane-spanning segment.

Belongs to the reaction center PufL/M/PsbA/D family. As to quaternary structure, PSII is composed of 1 copy each of membrane proteins PsbA, PsbB, PsbC, PsbD, PsbE, PsbF, PsbH, PsbI, PsbJ, PsbK, PsbL, PsbM, PsbT, PsbX, PsbY, PsbZ, Psb30/Ycf12, at least 3 peripheral proteins of the oxygen-evolving complex and a large number of cofactors. It forms dimeric complexes. It depends on The D1/D2 heterodimer binds P680, chlorophylls that are the primary electron donor of PSII, and subsequent electron acceptors. It shares a non-heme iron and each subunit binds pheophytin, quinone, additional chlorophylls, carotenoids and lipids. There is also a Cl(-1) ion associated with D1 and D2, which is required for oxygen evolution. The PSII complex binds additional chlorophylls, carotenoids and specific lipids. as a cofactor.

The protein resides in the plastid. It is found in the chloroplast thylakoid membrane. It catalyses the reaction 2 a plastoquinone + 4 hnu + 2 H2O = 2 a plastoquinol + O2. Its function is as follows. Photosystem II (PSII) is a light-driven water:plastoquinone oxidoreductase that uses light energy to abstract electrons from H(2)O, generating O(2) and a proton gradient subsequently used for ATP formation. It consists of a core antenna complex that captures photons, and an electron transfer chain that converts photonic excitation into a charge separation. The D1/D2 (PsbA/PsbD) reaction center heterodimer binds P680, the primary electron donor of PSII as well as several subsequent electron acceptors. D2 is needed for assembly of a stable PSII complex. The sequence is that of Photosystem II D2 protein from Nicotiana tabacum (Common tobacco).